Here is a 480-residue protein sequence, read N- to C-terminus: Glutamate--tRNA ligase (480 aa).

Residues 21–31 (PSPTGYLHVGG) carry the 'HIGH' region motif. Zn(2+) contacts are provided by Cys-110, Cys-112, Cys-137, and His-139. The 'KMSKS' region motif lies at 248 to 252 (KLSKR). Lys-251 is a binding site for ATP.

Belongs to the class-I aminoacyl-tRNA synthetase family. Glutamate--tRNA ligase type 1 subfamily. As to quaternary structure, monomer. It depends on Zn(2+) as a cofactor.

Its subcellular location is the cytoplasm. The enzyme catalyses tRNA(Glu) + L-glutamate + ATP = L-glutamyl-tRNA(Glu) + AMP + diphosphate. Catalyzes the attachment of glutamate to tRNA(Glu) in a two-step reaction: glutamate is first activated by ATP to form Glu-AMP and then transferred to the acceptor end of tRNA(Glu). This Actinobacillus succinogenes (strain ATCC 55618 / DSM 22257 / CCUG 43843 / 130Z) protein is Glutamate--tRNA ligase.